Consider the following 298-residue polypeptide: Glycine--tRNA ligase alpha subunit (298 aa).

It belongs to the class-II aminoacyl-tRNA synthetase family. Tetramer of two alpha and two beta subunits.

Its subcellular location is the cytoplasm. The enzyme catalyses tRNA(Gly) + glycine + ATP = glycyl-tRNA(Gly) + AMP + diphosphate. The sequence is that of Glycine--tRNA ligase alpha subunit from Helicobacter pylori (strain P12).